We begin with the raw amino-acid sequence, 977 residues long: MSEDGAQTAEKMDTHTQYYLESLIIDALKGKGFQKIIELFDGKVIFSSQFHNKLLLSQLDKLINKELDRNEFKHVSVLMKCIQHFCKNDCQESSTLIHQGLVSKMVLWFERTVDFLRISKEATLLTLVEDFYDSALVICKCNCEDGKRQLLDSFLIRLGHLVTEKWVACHLRLEALRTINCILDSISREDKKKLHCSEDLCELTKDLARTIQEAGDYDIQVAISEALCRMMGKKFRDSFVHQWFEDNFLADAFKEIKDKEFETDCRKFLNCLNSRHQSNKGVYTFPCITVFTDLDELKKPQDENMENFWIDFNAGSQCVSFYIHNTEGSLWDSVRLLKESVNNYTLKENDGQQMLGIYLKDPQVINTNDVTKVKIYFEPKHDIKSAIKRVFEDINEIHSNPVELDSTEGLIDIGNSLASHTVITTATTFKQWKRNQANKMDSASDILGSQTSEHSSTTKTSSANRSVQKSLSNADSHEIVIESVPLEAVITIADEQPNTAQFQDDMDDAIFQGAASDVPAKDSSQEIIIITEASADKEFAAKKTQGIFQFQGYSDTLASDQVSDAKKKILLPKQSTERATPASRYRASMNSPLQRTSSAYRSHLFCESNEVTSNTESERSWIQDFKNKSAVKSADYSCEKTRNKSKRKVLPLASESGDDEKQVDTTETVARFTSRKEMHRPEDINPKSPHSAELKLPGISALLTPGDSRSQSKSDYRYQSAIDDQDIMDPVEEASSPEMSIDHNKEPKNGHDEVYASGPLNRSVDGNNIYHAADTLQHATGKRKHKTCEREEIPFKPRKLFSSTEKNVNRSAADSEDSEDVFYSESHDQDLAEASVLSAFDSFTKELKRKFLTRYKRIENRANHVLKSSHQQVSTVLNEIHQCRLQKINHFNKIVVHELSSLEAEVQALKQFEKETLDFWEDQYVKMNTFCSSQTQRIKTMDSALLETISNLKNVIQKTTKEEVSNTEEHIQNKLLK.

Disordered regions lie at residues 447 to 474 (LGSQTSEHSSTTKTSSANRSVQKSLSNA), 574 to 593 (QSTERATPASRYRASMNSPL), 642 to 728 (RNKS…QDIM), and 804 to 824 (TEKNVNRSAADSEDSEDVFYS). Residues 449–462 (SQTSEHSSTTKTSS) are compositionally biased toward low complexity. Positions 463–474 (ANRSVQKSLSNA) are enriched in polar residues. Basic and acidic residues predominate over residues 674 to 693 (SRKEMHRPEDINPKSPHSAE).

Belongs to the SYCP2 family. Post-translationally, ubiquitinated and gradually degraded by the proteasome during oocyte maturation. In terms of processing, phosphorylated in maturing oocytes, before its degradation. As to expression, expressed in immature oocytes (at protein level). Expressed in the ovary.

It is found in the nucleus. The protein localises to the chromosome. The protein resides in the centromere. Its subcellular location is the nucleolus. Functionally, oocyte-specific protein that localizes to centromeres at the dictyate stage and regulates the survival of primordial oocytes. The sequence is that of Synaptonemal complex protein 2-like (sycp2l) from Xenopus laevis (African clawed frog).